A 303-amino-acid chain; its full sequence is Recombination-associated protein RdgC (303 aa).

Belongs to the RdgC family.

The protein localises to the cytoplasm. Its subcellular location is the nucleoid. In terms of biological role, may be involved in recombination. The sequence is that of Recombination-associated protein RdgC from Salmonella newport (strain SL254).